The chain runs to 31 residues: Cytochrome b6-f complex subunit 6 (31 aa).

Residues 4 to 26 (ITSYFGFLLTALTITSALFIGLS) form a helical membrane-spanning segment.

It belongs to the PetL family. The 4 large subunits of the cytochrome b6-f complex are cytochrome b6, subunit IV (17 kDa polypeptide, PetD), cytochrome f and the Rieske protein, while the 4 small subunits are PetG, PetL, PetM and PetN. The complex functions as a dimer.

The protein resides in the plastid. It is found in the chloroplast thylakoid membrane. In terms of biological role, component of the cytochrome b6-f complex, which mediates electron transfer between photosystem II (PSII) and photosystem I (PSI), cyclic electron flow around PSI, and state transitions. PetL is important for photoautotrophic growth as well as for electron transfer efficiency and stability of the cytochrome b6-f complex. The protein is Cytochrome b6-f complex subunit 6 of Lactuca sativa (Garden lettuce).